The sequence spans 377 residues: Putative glutamate--cysteine ligase 2 (377 aa).

It belongs to the glutamate--cysteine ligase type 2 family. YbdK subfamily.

The catalysed reaction is L-cysteine + L-glutamate + ATP = gamma-L-glutamyl-L-cysteine + ADP + phosphate + H(+). Functionally, ATP-dependent carboxylate-amine ligase which exhibits weak glutamate--cysteine ligase activity. This Pseudomonas aeruginosa (strain LESB58) protein is Putative glutamate--cysteine ligase 2.